Consider the following 64-residue polypeptide: Large ribosomal subunit protein bL35 (64 aa).

Residues 1 to 24 are compositionally biased toward basic residues; sequence MPKMKSHRGACKRFKKTASGKVKR. The interval 1–64 is disordered; the sequence is MPKMKSHRGA…EKQIKRMILA (64 aa). Over residues 25–35 the composition is skewed to basic and acidic residues; it reads ERMYGSHNLEK. The segment covering 36–45 has biased composition (basic residues); it reads KNRKRTRRLH.

Belongs to the bacterial ribosomal protein bL35 family.

The protein is Large ribosomal subunit protein bL35 of Prosthecochloris aestuarii (strain DSM 271 / SK 413).